A 164-amino-acid polypeptide reads, in one-letter code: R-phycoerythrin alpha chain (164 aa).

The (2R,3E)-phycoerythrobilin site is built by Asn47, Lys81, Cys82, Arg84, His88, Arg137, Cys139, and Arg142.

This sequence belongs to the phycobiliprotein family. Heterododecamer of 6 alpha and 6 beta chains. The basic functional unit of phycobiliproteins is a ring-shaped hexamer formed from two back-to-back trimers contacting via the alpha chain subunits. The trimers are composed of alpha/beta subunit heterodimers arranged around a three-fold axis of symmetry. The phycoerythrins also contain a gamma subunit which is located in the center of the hexamer. Contains two covalently linked phycoerythrobilin chromophores.

The protein localises to the plastid. It localises to the chloroplast thylakoid membrane. Light-harvesting photosynthetic tetrapyrrole chromophore-protein from the phycobiliprotein complex. The chain is R-phycoerythrin alpha chain (cpeA) from Griffithsia monilis (Red alga).